The following is a 408-amino-acid chain: Sprouty-related, EVH1 domain-containing protein 3 (408 aa).

Residues 1–113 (MVRVRAVVMA…KSLLAALAAL (113 aa)) form the WH1 domain. Positions 118-226 (LTPSSSSSSS…YEDYRRSGPP (109 aa)) are disordered. The segment covering 120–130 (PSSSSSSSSPS) has biased composition (low complexity). Positions 192-242 (LPFTGIPEPSESLAGAGSQGWGSRGYEDYRRSGPPPPPLALSTCVVRFAKT) constitute a KBD domain. Asymmetric dimethylarginine is present on R238. R246 is modified (omega-N-methylarginine). The tract at residues 256–286 (LPAPLTEAAPPAPPARPPPGPGPTPAPAKAS) is disordered. Residues 265–281 (PPAPPARPPPGPGPTPA) are compositionally biased toward pro residues. The SPR domain occupies 294 to 405 (RCVHCRALFR…CAGCGGRHEE (112 aa)).

Interacts with palmitoyltransferase ZDHHC17/HIP14; the interaction leads to palmitoylation of SPRED3. Phosphorylated on tyrosine. Post-translationally, palmitoylated by ZDHHC17/HIP14. In terms of processing, ubiquitinated. As to expression, brain specific.

The protein localises to the cell membrane. In terms of biological role, tyrosine kinase substrate that inhibits growth-factor-mediated activation of MAP kinase. Inhibits fibroblast growth factor (FGF)-induced retinal lens fiber differentiation, probably by inhibiting FGF-mediated phosphorylation of ERK1/2. Inhibits TGFB-induced epithelial-to-mesenchymal transition in lens epithelial cells. In Mus musculus (Mouse), this protein is Sprouty-related, EVH1 domain-containing protein 3 (Spred3).